A 394-amino-acid polypeptide reads, in one-letter code: Cell adhesion molecule 3 (394 aa).

The first 17 residues, 1–17 (MHHPVILLLCLSSLAGA), serve as a signal peptide directing secretion. At 18-326 (ANLPPEDLSQ…PIPSTSSIDH (309 aa)) the chain is on the extracellular side. Residues 22–120 (PEDLSQPVTA…PVRTAKAVVT (99 aa)) enclose the Ig-like V-type domain. Disulfide bonds link Cys45–Cys105 and Cys147–Cys204. Ig-like C2-type domains follow at residues 128–223 (PQVS…HKIQ) and 228–306 (PTAK…TFIT). Positions 217–240 (SSSHKIQVQYKPTAKIESRPSMPR) are disordered. Over residues 230–240 (AKIESRPSMPR) the composition is skewed to basic and acidic residues. Cys249 and Cys295 are oxidised to a cystine. Residues 327–347 (AVIGGVVAVIAFLLFCLLIVL) form a helical membrane-spanning segment. Residues 348-394 (GRYLIRHKGTYLTHEAKGSDDAPDADTAIINAEGGQGGSDDKKEYFI) lie on the Cytoplasmic side of the membrane. Residues 363-394 (AKGSDDAPDADTAIINAEGGQGGSDDKKEYFI) form a disordered region.

The protein belongs to the nectin family.

The protein localises to the cell membrane. It localises to the cell junction. Functionally, may be involved in cell-cell adhesion. This chain is Cell adhesion molecule 3 (cadm3), found in Xenopus laevis (African clawed frog).